The following is a 356-amino-acid chain: Cysteine protease XCP2 (356 aa).

The N-terminal stretch at 1–26 (MALSSPSRILCFALALSAASLSLSFA) is a signal peptide. The propeptide at 27–137 (SSHDYSIVGY…AEFAYRDVEA (111 aa)) is activation peptide. Disulfide bonds link cysteine 159-cysteine 201, cysteine 193-cysteine 234, and cysteine 292-cysteine 343. The active site involves cysteine 162. Residue asparagine 181 is glycosylated (N-linked (GlcNAc...) asparagine). Residues histidine 298 and asparagine 318 contribute to the active site.

Belongs to the peptidase C1 family. As to quaternary structure, interacts with PRN2. Mostly expressed in roots, stems and flowers. Confined to tracheary elements, and specifically to xylem.

Its subcellular location is the vacuole. It is found in the cell membrane. Functionally, cysteine protease involved in xylem tracheary element (TE) autolysis during xylogenesis in roots. Participates in micro autolysis within the intact central vacuole before mega autolysis is initiated by tonoplast implosion. Involved in susceptibility to the bacterial plant pathogen Ralstonia solanacearum. The chain is Cysteine protease XCP2 from Arabidopsis thaliana (Mouse-ear cress).